The sequence spans 905 residues: Protein LONGIFOLIA 2 (905 aa).

6 disordered regions span residues 42 to 136 (VSGG…GGLM), 232 to 268 (RLSL…RSSS), 285 to 315 (DTEQ…SRSV), 432 to 585 (STSP…SDSN), 606 to 626 (CDFP…IKQD), and 690 to 711 (VPFP…ECSP). Over residues 65 to 74 (ESDKETERSS) the composition is skewed to basic and acidic residues. Over residues 90–117 (FESSSRPSFSSSPRSSSFSSAEVSTTAS) the composition is skewed to low complexity. The segment covering 286–296 (TEQRRENRFCD) has biased composition (basic and acidic residues). Polar residues-rich tracts occupy residues 432–461 (STSP…SGKQ), 477–487 (LDSTKSNSPKT), and 501–516 (MTKS…SPRT). A compositionally biased stretch (basic and acidic residues) spans 566-581 (PDDRLSDARSDLRSLR).

As to quaternary structure, interacts (via C-terminus) with TON1A and TON1B.

The protein localises to the cytoplasm. It is found in the cytoskeleton. In association with LNG1, regulates leaf morphology by promoting longitudinal polar cell elongation independently of ROT3. Associates with microtubules and recruits TON1A and TON1B to the cytoskeleton through its C-terminus. The protein is Protein LONGIFOLIA 2 (LNG2) of Arabidopsis thaliana (Mouse-ear cress).